We begin with the raw amino-acid sequence, 115 residues long: Transcriptional regulator protein FixT (115 aa).

In terms of assembly, interacts directly with FixL.

Its function is as follows. Prevents transcription of the intermediate key regulatory genes nifA and fixK by counteracting the activity of the FixLJ two-component system. Acts as an inhibitor of the sensor hemoprotein kinase fixL, preventing the production or the accumulation of its phosphorylated form. This Rhizobium meliloti (strain 1021) (Ensifer meliloti) protein is Transcriptional regulator protein FixT (fixT).